The following is a 390-amino-acid chain: Protein PIN-LIKES 3 (390 aa).

Residues 1–14 (MVKLLELFITSSKP) lie on the Lumenal side of the membrane. A helical membrane pass occupies residues 15 to 35 (VVEILLITSVGFYMALDGVNL). The Cytoplasmic segment spans residues 36 to 43 (LGHDARKY). A helical transmembrane segment spans residues 44 to 61 (LNNIVFYVFSPSLIGSRL). Over 62–76 (ADSVTYESLVKMWFM) the chain is Lumenal. A helical membrane pass occupies residues 77 to 97 (PVNVLLTFIIGSLLGWIVIVI). Topologically, residues 98 to 107 (TKPPSHLRGL) are cytoplasmic. The chain crosses the membrane as a helical span at residues 108-128 (ILGCCAAGNLGNMPLIIIPAV). Over 129–144 (CKEKGGPFGDPESCQK) the chain is Lumenal. A helical transmembrane segment spans residues 145-165 (YGMGYVALSMAMGSIYIWTYV). Residues 166-227 (YNLMRVLSNS…SLSQKVNLKT (62 aa)) lie on the Cytoplasmic side of the membrane. Residues 228-248 (IFAPSTIAAMIALVIGLITPL) form a helical membrane-spanning segment. Residues 249 to 265 (RKLIIGTEAPLRVLQDS) lie on the Lumenal side of the membrane. Residues 266–286 (VTLVGDGAVPAMTMIIGGNLL) traverse the membrane as a helical segment. Topologically, residues 287–297 (KGLRSSGMKMS) are cytoplasmic. The chain crosses the membrane as a helical span at residues 298 to 318 (SIIGVLVARYVLLPMSGVLIV). Residues 319 to 331 (RGAYKLDLVTSEP) are Lumenal-facing. The helical transmembrane segment at 332 to 352 (LYQFVLLLQYAVPPAMNLGTI) threads the bilayer. Residues 353–364 (TQLFGTGESECS) lie on the Cytoplasmic side of the membrane. The helical transmembrane segment at 365-385 (VIMLWTYSLASIALTVWPTFF) threads the bilayer. Residues 386 to 390 (MWLVA) are Lumenal-facing.

It belongs to the auxin efflux carrier (TC 2.A.69.2) family. Expressed in seedlings, rosette and cauline leaves, flowers and siliques.

It localises to the endoplasmic reticulum membrane. Functionally, involved in cellular auxin homeostasis by regulating auxin metabolism. Regulates intracellular auxin accumulation at the endoplasmic reticulum and thus auxin availability for nuclear auxin signaling. The chain is Protein PIN-LIKES 3 (PILS3) from Arabidopsis thaliana (Mouse-ear cress).